The chain runs to 268 residues: tRNA pseudouridine synthase A (268 aa).

Catalysis depends on D52, which acts as the Nucleophile. Y110 is a substrate binding site.

The protein belongs to the tRNA pseudouridine synthase TruA family. As to quaternary structure, homodimer.

The enzyme catalyses uridine(38/39/40) in tRNA = pseudouridine(38/39/40) in tRNA. In terms of biological role, formation of pseudouridine at positions 38, 39 and 40 in the anticodon stem and loop of transfer RNAs. This chain is tRNA pseudouridine synthase A, found in Prochlorococcus marinus (strain MIT 9312).